The chain runs to 87 residues: Small ribosomal subunit protein bS20 (87 aa).

The protein belongs to the bacterial ribosomal protein bS20 family.

In terms of biological role, binds directly to 16S ribosomal RNA. The protein is Small ribosomal subunit protein bS20 of Clostridium botulinum (strain Alaska E43 / Type E3).